Here is a 206-residue protein sequence, read N- to C-terminus: Peptidyl-tRNA hydrolase (206 aa).

Tyrosine 14 provides a ligand contact to tRNA. Histidine 19 functions as the Proton acceptor in the catalytic mechanism. TRNA-binding residues include tyrosine 64 and asparagine 66. A disordered region spans residues 182-206; the sequence is FNQKNKKKKEKEQPEAATDQLLENK.

This sequence belongs to the PTH family. Monomer.

The protein resides in the cytoplasm. It carries out the reaction an N-acyl-L-alpha-aminoacyl-tRNA + H2O = an N-acyl-L-amino acid + a tRNA + H(+). In terms of biological role, hydrolyzes ribosome-free peptidyl-tRNAs (with 1 or more amino acids incorporated), which drop off the ribosome during protein synthesis, or as a result of ribosome stalling. Its function is as follows. Catalyzes the release of premature peptidyl moieties from peptidyl-tRNA molecules trapped in stalled 50S ribosomal subunits, and thus maintains levels of free tRNAs and 50S ribosomes. In Desulforamulus reducens (strain ATCC BAA-1160 / DSM 100696 / MI-1) (Desulfotomaculum reducens), this protein is Peptidyl-tRNA hydrolase.